A 525-amino-acid chain; its full sequence is Peptide chain release factor 3 (525 aa).

The region spanning 9–276 (AKRRTFAIIS…GFTRYAPAPQ (268 aa)) is the tr-type G domain. GTP contacts are provided by residues 18–25 (SHPDAGKT), 86–90 (DTPGH), and 140–143 (NKFD).

This sequence belongs to the TRAFAC class translation factor GTPase superfamily. Classic translation factor GTPase family. PrfC subfamily.

It is found in the cytoplasm. In terms of biological role, increases the formation of ribosomal termination complexes and stimulates activities of RF-1 and RF-2. It binds guanine nucleotides and has strong preference for UGA stop codons. It may interact directly with the ribosome. The stimulation of RF-1 and RF-2 is significantly reduced by GTP and GDP, but not by GMP. The polypeptide is Peptide chain release factor 3 (Francisella tularensis subsp. tularensis (strain FSC 198)).